The chain runs to 271 residues: Gasdermin bGSDM (271 aa).

Residue cysteine 7 is the site of S-palmitoyl cysteine attachment. Beta stranded transmembrane passes span 74–90 (IAGT…GLSV), 102–120 (TLGV…FEFS), 168–185 (RINV…GLNL), and 194–210 (ANVK…TVSF).

Belongs to the bacterial gasdermin family. In terms of assembly, monomer. Forms large, homooligomeric ring-shaped pores when inserted in membranes. Post-translationally, palmitoylation helps stabilize the inactive state; may self palmitoylate. Palmitoylation plays a significant role in pore formation.

It is found in the cytoplasm. The protein localises to the cell inner membrane. The full-length protein before cleavage is inactive: intramolecular interactions between the N-terminal domain and the C-terminal region as well as the lipid modification, mediate autoinhibition. The pyroptosis-like-inducing activity is carried by the released N-terminal domain (Gasdermin bGSDM, N-terminus). In terms of biological role, involved in defense against bacteriophages. When this probable 4 gene operon (bGSDM-FE772_23060-FE772_23065-FE772_23070) is inserted into E.coli it provides nearly 100-fold protection against phages T5 and T6 and about 8-fold against phage T4. The operon without bGSDM no longer protects against phage. Cleavage of this precursor by its dedicated protease(s) releases the active moiety (gasdermin bGSDM, N-terminus) which inserts into membranes, forming pores and triggering cell death. Its function is as follows. Pore-forming protein that causes membrane permeabilization via a pyroptosis-like activity. Makes ring-like pores when released. The polypeptide is Gasdermin bGSDM (Lysobacter enzymogenes).